Reading from the N-terminus, the 148-residue chain is Large ribosomal subunit protein bL9 (148 aa).

Belongs to the bacterial ribosomal protein bL9 family.

Binds to the 23S rRNA. The protein is Large ribosomal subunit protein bL9 of Bacillus cytotoxicus (strain DSM 22905 / CIP 110041 / 391-98 / NVH 391-98).